A 473-amino-acid chain; its full sequence is tRNA modification GTPase MnmE (473 aa).

(6S)-5-formyl-5,6,7,8-tetrahydrofolate-binding residues include Arg31, Glu95, and Arg134. In terms of domain architecture, TrmE-type G spans 230 to 394 (GVSTVIAGKP…LKQHMGDLVK (165 aa)). GTP is bound by residues 240–245 (NAGKST), 259–265 (SHMPGTT), and 284–287 (DTAG). Ser244 and Thr265 together coordinate Mg(2+). Lys473 is a binding site for (6S)-5-formyl-5,6,7,8-tetrahydrofolate.

The protein belongs to the TRAFAC class TrmE-Era-EngA-EngB-Septin-like GTPase superfamily. TrmE GTPase family. As to quaternary structure, homodimer. Heterotetramer of two MnmE and two MnmG subunits. The cofactor is K(+).

Its subcellular location is the cytoplasm. Functionally, exhibits a very high intrinsic GTPase hydrolysis rate. Involved in the addition of a carboxymethylaminomethyl (cmnm) group at the wobble position (U34) of certain tRNAs, forming tRNA-cmnm(5)s(2)U34. The sequence is that of tRNA modification GTPase MnmE from Chlorobaculum tepidum (strain ATCC 49652 / DSM 12025 / NBRC 103806 / TLS) (Chlorobium tepidum).